The chain runs to 193 residues: Ribonuclease HII (193 aa).

Residues 15–193 (YIVAGIDEAG…PYHRKSFKCC (179 aa)) form the RNase H type-2 domain. Residues Asp-21, Glu-22, and Asp-112 each contribute to the a divalent metal cation site.

This sequence belongs to the RNase HII family. Requires Mn(2+) as cofactor. Mg(2+) serves as cofactor.

The protein resides in the cytoplasm. It carries out the reaction Endonucleolytic cleavage to 5'-phosphomonoester.. Functionally, endonuclease that specifically degrades the RNA of RNA-DNA hybrids. The polypeptide is Ribonuclease HII (Rickettsia akari (strain Hartford)).